Consider the following 114-residue polypeptide: Iron-sulfur cluster insertion protein ErpA (114 aa).

Residues Cys42, Cys106, and Cys108 each coordinate iron-sulfur cluster.

Belongs to the HesB/IscA family. As to quaternary structure, homodimer. Iron-sulfur cluster is required as a cofactor.

Its function is as follows. Required for insertion of 4Fe-4S clusters for at least IspG. The polypeptide is Iron-sulfur cluster insertion protein ErpA (Klebsiella pneumoniae subsp. pneumoniae (strain ATCC 700721 / MGH 78578)).